The chain runs to 562 residues: Probable sesquiterpene synthase (562 aa).

Mg(2+) is bound by residues D315, D319, and E467. Residues 315-319 (DDIYD) carry the DDXXD motif motif.

This sequence belongs to the terpene synthase family. Tpsa subfamily. Mg(2+) serves as cofactor. It depends on Mn(2+) as a cofactor.

In terms of biological role, sesquiterpene synthase. The sequence is that of Probable sesquiterpene synthase (STPS) from Santalum murrayanum (Bitter quandong).